A 240-amino-acid chain; its full sequence is Nuclear receptor-interacting protein 3 (240 aa).

The protein is Nuclear receptor-interacting protein 3 (Nrip3) of Mus musculus (Mouse).